The sequence spans 236 residues: Alpha-S2-casein (236 aa).

An N-terminal signal peptide occupies residues 1–15 (MKFFIFTCLLAVALA). Phosphoserine is present on residues Ser23, Ser24, Ser25, Ser28, Ser47, Ser80, Ser81, Ser82, Ser85, Ser157, and Ser169. The segment at 72–93 (PTEVYSSSSSSEESAKFPTERE) is disordered. Basic and acidic residues predominate over residues 84 to 93 (ESAKFPTERE).

This sequence belongs to the alpha-casein family. In terms of processing, there are at least three different forms found in milk, with varying degrees of phosphorylation. These include form 10-P which is phosphorylated at ten sites that have not been determined, form 11-P which is phosphorylated at eleven sites and form 12-P which is phosphorylated at twelve sites. In terms of tissue distribution, mammary gland specific. Secreted in milk.

Its subcellular location is the secreted. Functionally, important role in the capacity of milk to transport calcium phosphate. The protein is Alpha-S2-casein of Equus asinus (Donkey).